We begin with the raw amino-acid sequence, 583 residues long: Extracellular serine/threonine protein kinase four-jointed (583 aa).

Residues 1 to 78 (MYDIKRLEAG…RRRSLQRRAC (78 aa)) are Cytoplasmic-facing. A helical; Signal-anchor for type II membrane protein transmembrane segment spans residues 79–99 (LLSILAAFVFGMALGVVVPMF). Over 100 to 583 (GLPRHQDSPP…LGQVQKCQGS (484 aa)) the chain is Extracellular. The tract at residues 179–222 (RTASGRYRKGPERRLSKKMPERVQPQETSRSPTTSPTNPTSEHQ) is disordered. Residues 187-199 (KGPERRLSKKMPE) show a composition bias toward basic and acidic residues. The segment covering 206–219 (TSRSPTTSPTNPTS) has biased composition (low complexity). 2 N-linked (GlcNAc...) asparagine glycosylation sites follow: asparagine 310 and asparagine 379. The segment at 384–421 (MQSERQAQSQPHGLLKRLGAASSPGSAHQSNAIEETGT) is disordered. N-linked (GlcNAc...) asparagine glycosylation is present at asparagine 491.

Belongs to the FJX1/FJ family. In terms of processing, proteolytically cleaved to yield a secreted protein. In the eye disk, expressed in a gradient ahead of the morphogenetic furrow, high at the equator and low at the poles of the eye. In the leg disk, expressed in concentric rings, possibly corresponding to segmental boundaries. In the wing disk, expression is localized in the wing pouch; low in peripheral regions and high towards the center.

The protein resides in the golgi apparatus membrane. Its subcellular location is the secreted. The enzyme catalyses L-seryl-[protein] + ATP = O-phospho-L-seryl-[protein] + ADP + H(+). The catalysed reaction is L-threonyl-[protein] + ATP = O-phospho-L-threonyl-[protein] + ADP + H(+). Its function is as follows. Golgi serine/threonine protein kinase required for intermediate growth in the proximal-distal axis. Phosphorylates specific residues within extracellular cadherin domains of Fat (ft) and Dachsous (ds) as they transit through the Golgi. Acts in ommatidial polarity determination as a secondary signal downstream of Notch, JAK/STAT and wingless. Also necessary for the initiation, up-regulation or maintenance of Notch ligand, Serrate (Ser) expression in legs, thereby participating in a feedback loop with N signaling. Sufficient for joint formation and growth in the leg. This chain is Extracellular serine/threonine protein kinase four-jointed, found in Drosophila melanogaster (Fruit fly).